A 48-amino-acid polypeptide reads, in one-letter code: Sperm protamine P1 (48 aa).

It belongs to the protamine P1 family. In terms of tissue distribution, testis.

It localises to the nucleus. It is found in the chromosome. Its function is as follows. Protamines substitute for histones in the chromatin of sperm during the haploid phase of spermatogenesis. They compact sperm DNA into a highly condensed, stable and inactive complex. The polypeptide is Sperm protamine P1 (PRM1) (Monophyllus redmani (Greater Antillean long-tongued bat)).